A 300-amino-acid chain; its full sequence is Small ribosomal subunit biogenesis GTPase RsgA (300 aa).

Residues 69 to 231 (RSDEMRVKQF…LIDSPGFQAF (163 aa)) form the CP-type G domain. GTP-binding positions include 119–122 (NKID) and 172–180 (GQSGMGKST). C255, C260, H262, and C268 together coordinate Zn(2+).

The protein belongs to the TRAFAC class YlqF/YawG GTPase family. RsgA subfamily. In terms of assembly, monomer. Associates with 30S ribosomal subunit, binds 16S rRNA. The cofactor is Zn(2+).

The protein localises to the cytoplasm. In terms of biological role, one of several proteins that assist in the late maturation steps of the functional core of the 30S ribosomal subunit. Helps release RbfA from mature subunits. May play a role in the assembly of ribosomal proteins into the subunit. Circularly permuted GTPase that catalyzes slow GTP hydrolysis, GTPase activity is stimulated by the 30S ribosomal subunit. The chain is Small ribosomal subunit biogenesis GTPase RsgA from Bordetella bronchiseptica (strain ATCC BAA-588 / NCTC 13252 / RB50) (Alcaligenes bronchisepticus).